Consider the following 501-residue polypeptide: Glycerol kinase (501 aa).

Thr-14 is a binding site for ADP. ATP is bound by residues Thr-14, Thr-15, and Ser-16. Thr-14 is a sn-glycerol 3-phosphate binding site. Arg-18 lines the ADP pocket. Residues Arg-84, Glu-85, and Tyr-136 each coordinate sn-glycerol 3-phosphate. Glycerol is bound by residues Arg-84, Glu-85, and Tyr-136. His-231 is subject to Phosphohistidine; by HPr. Position 245 (Asp-245) interacts with sn-glycerol 3-phosphate. Glycerol contacts are provided by Asp-245 and Gln-246. Residues Thr-267 and Gly-310 each contribute to the ADP site. The ATP site is built by Thr-267, Gly-310, Gln-314, and Gly-411. 2 residues coordinate ADP: Gly-411 and Asn-415.

The protein belongs to the FGGY kinase family. As to quaternary structure, homotetramer and homodimer (in equilibrium). Post-translationally, the phosphoenolpyruvate-dependent sugar phosphotransferase system (PTS), including enzyme I, and histidine-containing protein (HPr) are required for the phosphorylation of His-231, which leads to the activation of the enzyme.

It catalyses the reaction glycerol + ATP = sn-glycerol 3-phosphate + ADP + H(+). It participates in polyol metabolism; glycerol degradation via glycerol kinase pathway; sn-glycerol 3-phosphate from glycerol: step 1/1. With respect to regulation, activated by phosphorylation and inhibited by fructose 1,6-bisphosphate (FBP). In terms of biological role, key enzyme in the regulation of glycerol uptake and metabolism. Catalyzes the phosphorylation of glycerol to yield sn-glycerol 3-phosphate. This is Glycerol kinase from Enterococcus faecalis (strain ATCC 700802 / V583).